Consider the following 116-residue polypeptide: Large ribosomal subunit protein bL17 (116 aa).

This sequence belongs to the bacterial ribosomal protein bL17 family. As to quaternary structure, part of the 50S ribosomal subunit. Contacts protein L32.

This is Large ribosomal subunit protein bL17 from Helicobacter pylori (strain J99 / ATCC 700824) (Campylobacter pylori J99).